The primary structure comprises 596 residues: MHRYRSHTCAALRKSDVGSTVRISGWVHRVRDHGGVLFIDLRDHYGITQVVADPDSPAFKLAETVRGEWVIRIDGLVKARTEDTVNKTMPTGEIELYAQEIEVLSAAKELPLPIFGEPDYPEDVRLKYRFLDLRRDTLHKNIVKRTQVISSMRRHMGEVGFTEYTTPILTASSPEGARDFLVPSRIHPGTFYALPQAPQQYKQLLMVAGFDRYFQIAPCFRDEDPRADRLPGEFYQLDLEMSFVTQEDVWNTMAPLMTSIFEEFAEGKPVTKEWPRIPYDVAIRKYGSDKPDLRNPIVMEAVTEHFAGSGFKVFANMIASNPKVEVWAIPAKTGGSRAFCDRMNAWAQSQGQPGLGYIFWRKEGEKLEGAGPLAKNIGEERTDAIRTQLGLDDGDACFFVAGDPAKFYKFAGEARTRAGDELNLIDRDRFELCWIVDFPFFEWSEEEKKVDFAHNPFSMPQGGLEALQNQDPLTIKAYQYDAVCNGFEIASGSIRNQSPETMVAAFEKVGLSQADVEERFGGLYRAFQYGAPPHGGAAFGIDRIVMLLVGAKNLREISLFPMNQQAQDLLMGAPSVATPTQLRELAIRPVPPVKKD.

E175 lines the L-aspartate pocket. The aspartate stretch occupies residues 199-202 (QQYK). 2 residues coordinate L-aspartate: R221 and H454. Residue 221–223 (RDE) participates in ATP binding. E488 lines the ATP pocket. Residue R495 participates in L-aspartate binding. 540-543 (GIDR) lines the ATP pocket.

Belongs to the class-II aminoacyl-tRNA synthetase family. Type 1 subfamily. Homodimer.

The protein localises to the cytoplasm. It catalyses the reaction tRNA(Asx) + L-aspartate + ATP = L-aspartyl-tRNA(Asx) + AMP + diphosphate. Its function is as follows. Aspartyl-tRNA synthetase with relaxed tRNA specificity since it is able to aspartylate not only its cognate tRNA(Asp) but also tRNA(Asn). Reaction proceeds in two steps: L-aspartate is first activated by ATP to form Asp-AMP and then transferred to the acceptor end of tRNA(Asp/Asn). The sequence is that of Aspartate--tRNA(Asp/Asn) ligase from Rhizobium rhizogenes (strain K84 / ATCC BAA-868) (Agrobacterium radiobacter).